The chain runs to 59 residues: uncharacterized protein (59 aa).

Residues 1–17 (MIASIWYAELGCASAIA) form the signal peptide.

This is an uncharacterized protein from Rickettsia prowazekii (strain Madrid E).